We begin with the raw amino-acid sequence, 250 residues long: Small ribosomal subunit protein uS2 (250 aa).

A disordered region spans residues 226–250 (DQQNRQELGEDLGAAVEPAAEEALA). Residues 239–250 (AAVEPAAEEALA) are compositionally biased toward low complexity.

This sequence belongs to the universal ribosomal protein uS2 family.

This chain is Small ribosomal subunit protein uS2 (rpsB), found in Zymomonas mobilis subsp. mobilis (strain ATCC 31821 / ZM4 / CP4).